The following is a 314-amino-acid chain: DNA-directed RNA polymerase subunit alpha (314 aa).

An alpha N-terminal domain (alpha-NTD) region spans residues 1 to 228 (MAQYTIECVE…DQLRPLQEIT (228 aa)). The tract at residues 241–314 (NTVGQVPIEE…SLPKDKPARS (74 aa)) is alpha C-terminal domain (alpha-CTD).

Belongs to the RNA polymerase alpha chain family. As to quaternary structure, in cyanobacteria the RNAP catalytic core is composed of 2 alpha, 1 beta, 1 beta', 1 gamma and 1 omega subunit. When a sigma factor is associated with the core the holoenzyme is formed, which can initiate transcription.

It catalyses the reaction RNA(n) + a ribonucleoside 5'-triphosphate = RNA(n+1) + diphosphate. DNA-dependent RNA polymerase catalyzes the transcription of DNA into RNA using the four ribonucleoside triphosphates as substrates. This Gloeobacter violaceus (strain ATCC 29082 / PCC 7421) protein is DNA-directed RNA polymerase subunit alpha.